Consider the following 202-residue polypeptide: uncharacterized protein (202 aa).

Lysine 136 participates in a covalent cross-link: Isoglutamyl lysine isopeptide (Lys-Gln) (interchain with Q-Cter in protein Pup).

This is an uncharacterized protein from Mycobacterium tuberculosis (strain CDC 1551 / Oshkosh).